Reading from the N-terminus, the 94-residue chain is Translation initiation factor IF-1 (94 aa).

The 72-residue stretch at 1-72 (MAKEELIQFE…EKGRLIFRHK (72 aa)) folds into the S1-like domain. A disordered region spans residues 71-94 (HKDERPGGTGAPRSGPPRGQFRRR).

It belongs to the IF-1 family. Component of the 30S ribosomal translation pre-initiation complex which assembles on the 30S ribosome in the order IF-2 and IF-3, IF-1 and N-formylmethionyl-tRNA(fMet); mRNA recruitment can occur at any time during PIC assembly.

The protein localises to the cytoplasm. Its function is as follows. One of the essential components for the initiation of protein synthesis. Stabilizes the binding of IF-2 and IF-3 on the 30S subunit to which N-formylmethionyl-tRNA(fMet) subsequently binds. Helps modulate mRNA selection, yielding the 30S pre-initiation complex (PIC). Upon addition of the 50S ribosomal subunit IF-1, IF-2 and IF-3 are released leaving the mature 70S translation initiation complex. The chain is Translation initiation factor IF-1 from Rhodopseudomonas palustris (strain HaA2).